A 601-amino-acid polypeptide reads, in one-letter code: Oligoendopeptidase F homolog (601 aa).

Residue His-387 coordinates Zn(2+). Glu-388 is an active-site residue. Residues His-391 and His-394 each contribute to the Zn(2+) site.

Belongs to the peptidase M3 family. It depends on Zn(2+) as a cofactor.

Functionally, hydrolyzes peptides containing between 7 and 17 amino acids with a rather wide specificity. The chain is Oligoendopeptidase F homolog (pepF) from Lactococcus lactis subsp. lactis (strain IL1403) (Streptococcus lactis).